Here is a 197-residue protein sequence, read N- to C-terminus: uncharacterized protein (197 aa).

Disordered regions lie at residues 1–30 and 115–174; these read MSDDLNDFFAKKDSTKKVVKKPTSTTPKVV and PSLK…KQEL. Residues 21–30 are compositionally biased toward low complexity; the sequence is KPTSTTPKVV. The span at 123-137 shows a compositional bias: acidic residues; the sequence is KVDEDDDQIYEDKEE. Residues 157-170 are compositionally biased toward basic residues; it reads KSNKKVAPKQKKKS.

This is an uncharacterized protein from Dictyostelium discoideum (Social amoeba).